The sequence spans 348 residues: Quinone oxidoreductase-like protein 1 (348 aa).

Belongs to the zinc-containing alcohol dehydrogenase family. Quinone oxidoreductase subfamily. As to quaternary structure, component of the FERRY complex composed of five subunits, TBCK, PPP1R21, FERRY3, CRYZL1 and GATD1 with a ratio of 1:2:1:2:4, respectively.

It localises to the early endosome. Its function is as follows. Component of the FERRY complex (Five-subunit Endosomal Rab5 and RNA/ribosome intermediary). The FERRY complex directly interacts with mRNAs and RAB5A, and functions as a RAB5A effector involved in the localization and the distribution of specific mRNAs most likely by mediating their endosomal transport. The complex recruits mRNAs and ribosomes to early endosomes through direct mRNA-interaction. The chain is Quinone oxidoreductase-like protein 1 (Cryzl1) from Mus musculus (Mouse).